Here is a 63-residue protein sequence, read N- to C-terminus: UPF0370 protein ECA1289 (63 aa).

A helical transmembrane segment spans residues 3-23 (WLADYWWIILIILIGMLINGI). Residues 39–63 (PKLPPHRDNNDKWDNEEDDWPKKKP) form a disordered region.

This sequence belongs to the UPF0370 family.

It is found in the cell membrane. The sequence is that of UPF0370 protein ECA1289 from Pectobacterium atrosepticum (strain SCRI 1043 / ATCC BAA-672) (Erwinia carotovora subsp. atroseptica).